Reading from the N-terminus, the 374-residue chain is Anhydro-N-acetylmuramic acid kinase (374 aa).

12 to 19 (GTSLDGID) serves as a coordination point for ATP.

Belongs to the anhydro-N-acetylmuramic acid kinase family.

It catalyses the reaction 1,6-anhydro-N-acetyl-beta-muramate + ATP + H2O = N-acetyl-D-muramate 6-phosphate + ADP + H(+). The protein operates within amino-sugar metabolism; 1,6-anhydro-N-acetylmuramate degradation. It functions in the pathway cell wall biogenesis; peptidoglycan recycling. Functionally, catalyzes the specific phosphorylation of 1,6-anhydro-N-acetylmuramic acid (anhMurNAc) with the simultaneous cleavage of the 1,6-anhydro ring, generating MurNAc-6-P. Is required for the utilization of anhMurNAc either imported from the medium or derived from its own cell wall murein, and thus plays a role in cell wall recycling. The protein is Anhydro-N-acetylmuramic acid kinase of Klebsiella pneumoniae subsp. pneumoniae (strain ATCC 700721 / MGH 78578).